The primary structure comprises 314 residues: Cytochrome c biogenesis protein CcsA (314 aa).

The next 8 helical transmembrane spans lie at 15 to 35, 48 to 68, 73 to 93, 102 to 122, 148 to 168, 216 to 236, 250 to 267, and 277 to 297; these read VSFI…ISLI, LITI…WIIS, ISNL…GQLL, IIPA…CFVL, VMLS…VLFI, SILV…IWAN, TWAF…HMRI, and ALLA…VNFL.

The protein belongs to the CcmF/CycK/Ccl1/NrfE/CcsA family. As to quaternary structure, may interact with ccs1.

The protein localises to the cellular thylakoid membrane. In terms of biological role, required during biogenesis of c-type cytochromes (cytochrome c6 and cytochrome f) at the step of heme attachment. The sequence is that of Cytochrome c biogenesis protein CcsA from Prochlorococcus marinus subsp. pastoris (strain CCMP1986 / NIES-2087 / MED4).